The primary structure comprises 25 residues: Hypotensin-2 (25 aa).

Positions 1–25 (AEIDFSGIPEDIIKEIKETNAKPPA) are disordered. S6 bears the Phosphoserine mark. Residues 11–25 (DIIKEIKETNAKPPA) are compositionally biased toward basic and acidic residues.

The protein belongs to the non-disulfide-bridged peptide (NDBP) superfamily. In terms of tissue distribution, expressed by the venom gland.

It is found in the secreted. Functionally, agonist of the B2 bradykinin receptor (BDKRB2). Potentiates the hypotensive effect of bradykinin (BK) and induces a direct vasorelaxing effect, independently of BK, by endothelium- and nitric oxide (NO)-dependent mechanisms in rat aortic ring preparations. Does not inhibit the angiotensin-converting enzyme (ACE). Also exerts proangiogenic, antiinflammatory, and antifibrogenic activities. Does not inhibit the angiotensin-converting enzyme (ACE) but weakly increases its activity, and weakly inhibits neprilysin (NEP) in a non-competitive manner. Exerts intermediate cytotoxicity and pro-inflammatory effects on mouse macrophages, and increases the phagocytic activity of these murine cells. Its function is as follows. Presents weak hemolytic activity at physiological concentrations (micromolar range), and weak lactate dehydrogenase (LDH) release from mast cells. Does not induce mast cell degranulation, and antimicrobial effects. In vivo, causes intense pain (but no edema formation), when injected in mice hind paws. Also induces discomfort and anxiety in mice, as it moderately diminishes locomotion and moderately increases rearing behavior. The protein is Hypotensin-2 of Tityus serrulatus (Brazilian scorpion).